We begin with the raw amino-acid sequence, 298 residues long: ATP-dependent Clp protease proteolytic subunit 5, chloroplastic (298 aa).

The transit peptide at 1 to 100 directs the protein to the chloroplast; that stretch reads MAHACVSTSA…SSPYFPAYAQ (100 aa). N-acetylglycine is present on Gly101. Ser193 (nucleophile) is an active-site residue. The active site involves His218.

Belongs to the peptidase S14 family. In terms of assembly, component of the chloroplastic Clp protease core complex which consist of at least 16 proteins: CLPP4 (3 copies), CLPP5 (3 copies), CLPR4 (2 copies), ClpP1 (1 copy), CLPP6 (1 copy), CLPR2 (1 copy), CLPT1 (1 copy), CLPT2 (1 copy) and 3 copies of CLPP3 and/or CLPR1 and/or CLPR3. The core complex is organized in two heptameric rings, one containing CLPP3,4,5,6 in a 1:2:3:1 ratio and the other CLPP1 and CLPR1,2,3,4 in a 3:1:1:1:1 ratio. Interacts with CHIP. Post-translationally, ubiquitinated in vitro by CHIP. As to expression, mostly expressed in leaves. Also detected in stems, and to a lower extent, in roots (at protein level).

The protein localises to the plastid. The protein resides in the chloroplast stroma. It catalyses the reaction Hydrolysis of proteins to small peptides in the presence of ATP and magnesium. alpha-casein is the usual test substrate. In the absence of ATP, only oligopeptides shorter than five residues are hydrolyzed (such as succinyl-Leu-Tyr-|-NHMec, and Leu-Tyr-Leu-|-Tyr-Trp, in which cleavage of the -Tyr-|-Leu- and -Tyr-|-Trp bonds also occurs).. Functionally, cleaves peptides in various proteins in a process that requires ATP hydrolysis. Has a chymotrypsin-like activity. Plays a major role in the degradation of misfolded proteins. This is ATP-dependent Clp protease proteolytic subunit 5, chloroplastic from Arabidopsis thaliana (Mouse-ear cress).